Reading from the N-terminus, the 319-residue chain is D-alanine--D-alanine ligase (319 aa).

Residues 1-23 are disordered; sequence MTGPEWAHTRGTKVGQSSRTPPK. One can recognise an ATP-grasp domain in the interval 120 to 313; sequence KDAFVAAGLP…FGKLCAWMVE (194 aa). Residue 147–197 participates in ATP binding; it reads MQPPYVVKPNNEGSSVGVYLVHEAANGPPQLSEDMPQEVMVEAFAPGRELT. The Mg(2+) site is built by Asp-264, Glu-280, and Asn-282.

Belongs to the D-alanine--D-alanine ligase family. Requires Mg(2+) as cofactor. Mn(2+) is required as a cofactor.

It localises to the cytoplasm. The enzyme catalyses 2 D-alanine + ATP = D-alanyl-D-alanine + ADP + phosphate + H(+). The protein operates within cell wall biogenesis; peptidoglycan biosynthesis. Cell wall formation. The protein is D-alanine--D-alanine ligase of Roseobacter denitrificans (strain ATCC 33942 / OCh 114) (Erythrobacter sp. (strain OCh 114)).